The sequence spans 123 residues: Large ribosomal subunit protein uL24 (123 aa).

This sequence belongs to the universal ribosomal protein uL24 family. Part of the 50S ribosomal subunit.

Its function is as follows. One of two assembly initiator proteins, it binds directly to the 5'-end of the 23S rRNA, where it nucleates assembly of the 50S subunit. Functionally, located at the polypeptide exit tunnel on the outside of the subunit. This chain is Large ribosomal subunit protein uL24, found in Methanocella arvoryzae (strain DSM 22066 / NBRC 105507 / MRE50).